Consider the following 280-residue polypeptide: Suppressor of disruption of TFIIS (280 aa).

This sequence belongs to the SSM1 family.

Functionally, could be an enzyme that inactivates 6-azauracil by modifying it. In Saccharomyces cerevisiae (strain ATCC 204508 / S288c) (Baker's yeast), this protein is Suppressor of disruption of TFIIS (SDT1).